We begin with the raw amino-acid sequence, 305 residues long: NAD kinase (305 aa).

Asp82 serves as the catalytic Proton acceptor. NAD(+)-binding positions include 82 to 83, 156 to 157, Arg184, Asp186, 197 to 202, Ala221, and Gln255; these read DG, ND, and TAYALS.

This sequence belongs to the NAD kinase family. A divalent metal cation is required as a cofactor.

It localises to the cytoplasm. The enzyme catalyses NAD(+) + ATP = ADP + NADP(+) + H(+). Functionally, involved in the regulation of the intracellular balance of NAD and NADP, and is a key enzyme in the biosynthesis of NADP. Catalyzes specifically the phosphorylation on 2'-hydroxyl of the adenosine moiety of NAD to yield NADP. The protein is NAD kinase of Cupriavidus pinatubonensis (strain JMP 134 / LMG 1197) (Cupriavidus necator (strain JMP 134)).